A 106-amino-acid polypeptide reads, in one-letter code: UPF0145 protein BH0643 (106 aa).

This sequence belongs to the UPF0145 family.

This Halalkalibacterium halodurans (strain ATCC BAA-125 / DSM 18197 / FERM 7344 / JCM 9153 / C-125) (Bacillus halodurans) protein is UPF0145 protein BH0643.